The sequence spans 184 residues: ATP synthase subunit b, chloroplastic (184 aa).

Residues 27–49 (LATNPINLSVVFGVLIFFGKGVL) form a helical membrane-spanning segment.

This sequence belongs to the ATPase B chain family. As to quaternary structure, F-type ATPases have 2 components, F(1) - the catalytic core - and F(0) - the membrane proton channel. F(1) has five subunits: alpha(3), beta(3), gamma(1), delta(1), epsilon(1). F(0) has four main subunits: a(1), b(1), b'(1) and c(10-14). The alpha and beta chains form an alternating ring which encloses part of the gamma chain. F(1) is attached to F(0) by a central stalk formed by the gamma and epsilon chains, while a peripheral stalk is formed by the delta, b and b' chains.

Its subcellular location is the plastid. It localises to the chloroplast thylakoid membrane. In terms of biological role, f(1)F(0) ATP synthase produces ATP from ADP in the presence of a proton or sodium gradient. F-type ATPases consist of two structural domains, F(1) containing the extramembraneous catalytic core and F(0) containing the membrane proton channel, linked together by a central stalk and a peripheral stalk. During catalysis, ATP synthesis in the catalytic domain of F(1) is coupled via a rotary mechanism of the central stalk subunits to proton translocation. Its function is as follows. Component of the F(0) channel, it forms part of the peripheral stalk, linking F(1) to F(0). This chain is ATP synthase subunit b, chloroplastic, found in Crucihimalaya wallichii (Rock-cress).